A 212-amino-acid polypeptide reads, in one-letter code: dTTP/UTP pyrophosphatase (212 aa).

The active-site Proton acceptor is D88.

This sequence belongs to the Maf family. YhdE subfamily. Requires a divalent metal cation as cofactor.

The protein resides in the cytoplasm. It carries out the reaction dTTP + H2O = dTMP + diphosphate + H(+). It catalyses the reaction UTP + H2O = UMP + diphosphate + H(+). Functionally, nucleoside triphosphate pyrophosphatase that hydrolyzes dTTP and UTP. May have a dual role in cell division arrest and in preventing the incorporation of modified nucleotides into cellular nucleic acids. The sequence is that of dTTP/UTP pyrophosphatase from Colwellia psychrerythraea (strain 34H / ATCC BAA-681) (Vibrio psychroerythus).